Reading from the N-terminus, the 209-residue chain is MKKLVTGLLALSLFLAACGQDSDQQKDSNKEKDDKAKTEQQDKKTNDSSKDKKDNKDDSKDVNKDNKDNSANDNQQQSNSNATNNDQNQTNNNQSNSGQTTNNQKSSYVAPYYGQNAAPVARQIYPFNGNKSQALQQLPNFQTALNAANNEANKFGNGHKVYNDYSIEEHNGNYKYVFSFKDPNVNGKYSIVTVDYTGQAMVTDPNYQQ.

A signal peptide spans 1–17 (MKKLVTGLLALSLFLAA). The segment at 17-106 (ACGQDSDQQK…SGQTTNNQKS (90 aa)) is disordered. A lipid anchor (N-palmitoyl cysteine) is attached at Cys-18. Cys-18 is lipidated: S-diacylglycerol cysteine. Basic and acidic residues predominate over residues 23-70 (DQQKDSNKEKDDKAKTEQQDKKTNDSSKDKKDNKDDSKDVNKDNKDNS). Positions 71-106 (ANDNQQQSNSNATNNDQNQTNNNQSNSGQTTNNQKS) are enriched in low complexity.

It localises to the cell membrane. This is an uncharacterized protein from Staphylococcus aureus (strain MRSA252).